Reading from the N-terminus, the 259-residue chain is uncharacterized protein (259 aa).

It belongs to the BtpA family.

This is an uncharacterized protein from Pyrococcus horikoshii (strain ATCC 700860 / DSM 12428 / JCM 9974 / NBRC 100139 / OT-3).